Consider the following 328-residue polypeptide: 4-hydroxythreonine-4-phosphate dehydrogenase (328 aa).

Residues histidine 134 and threonine 135 each coordinate substrate. Positions 164, 209, and 265 each coordinate a divalent metal cation. Substrate-binding residues include lysine 273, asparagine 282, and arginine 291.

The protein belongs to the PdxA family. In terms of assembly, homodimer. Zn(2+) serves as cofactor. It depends on Mg(2+) as a cofactor. Requires Co(2+) as cofactor.

Its subcellular location is the cytoplasm. The enzyme catalyses 4-(phosphooxy)-L-threonine + NAD(+) = 3-amino-2-oxopropyl phosphate + CO2 + NADH. The protein operates within cofactor biosynthesis; pyridoxine 5'-phosphate biosynthesis; pyridoxine 5'-phosphate from D-erythrose 4-phosphate: step 4/5. Catalyzes the NAD(P)-dependent oxidation of 4-(phosphooxy)-L-threonine (HTP) into 2-amino-3-oxo-4-(phosphooxy)butyric acid which spontaneously decarboxylates to form 3-amino-2-oxopropyl phosphate (AHAP). In Vibrio vulnificus (strain YJ016), this protein is 4-hydroxythreonine-4-phosphate dehydrogenase.